Consider the following 162-residue polypeptide: NAD(P)H-quinone oxidoreductase subunit N (162 aa).

The protein belongs to the complex I NdhN subunit family. In terms of assembly, NDH-1 can be composed of about 15 different subunits; different subcomplexes with different compositions have been identified which probably have different functions.

It localises to the cellular thylakoid membrane. The catalysed reaction is a plastoquinone + NADH + (n+1) H(+)(in) = a plastoquinol + NAD(+) + n H(+)(out). The enzyme catalyses a plastoquinone + NADPH + (n+1) H(+)(in) = a plastoquinol + NADP(+) + n H(+)(out). Functionally, NDH-1 shuttles electrons from an unknown electron donor, via FMN and iron-sulfur (Fe-S) centers, to quinones in the respiratory and/or the photosynthetic chain. The immediate electron acceptor for the enzyme in this species is believed to be plastoquinone. Couples the redox reaction to proton translocation, and thus conserves the redox energy in a proton gradient. Cyanobacterial NDH-1 also plays a role in inorganic carbon-concentration. This chain is NAD(P)H-quinone oxidoreductase subunit N, found in Nostoc sp. (strain PCC 7120 / SAG 25.82 / UTEX 2576).